The chain runs to 182 residues: Adenine phosphoribosyltransferase (182 aa).

It belongs to the purine/pyrimidine phosphoribosyltransferase family. As to quaternary structure, homodimer.

Its subcellular location is the cytoplasm. It carries out the reaction AMP + diphosphate = 5-phospho-alpha-D-ribose 1-diphosphate + adenine. The protein operates within purine metabolism; AMP biosynthesis via salvage pathway; AMP from adenine: step 1/1. Its function is as follows. Catalyzes a salvage reaction resulting in the formation of AMP, that is energically less costly than de novo synthesis. This is Adenine phosphoribosyltransferase from Pseudomonas aeruginosa (strain LESB58).